The chain runs to 317 residues: 2-keto-3-deoxygluconate permease 1 (317 aa).

10 helical membrane-spanning segments follow: residues 10 to 30, 47 to 67, 82 to 102, 106 to 126, 134 to 154, 159 to 179, 195 to 215, 217 to 237, 248 to 268, and 279 to 299; these read VPGG…TFAP, AAPL…VKAA, LLVA…EGIF, GVAI…ALVG, VGAI…IALG, ANIP…GMIL, PLLI…EMLL, GGLA…FFNI, IAGA…LAIA, and AAAA…TPVL.

The protein belongs to the KdgT transporter family.

It is found in the cell inner membrane. The catalysed reaction is 2-dehydro-3-deoxy-D-gluconate(in) + H(+)(in) = 2-dehydro-3-deoxy-D-gluconate(out) + H(+)(out). In terms of biological role, catalyzes the proton-dependent uptake of 2-keto-3-deoxygluconate (KDG) into the cell. The chain is 2-keto-3-deoxygluconate permease 1 from Salmonella typhi.